The chain runs to 182 residues: Putative colanic acid biosynthesis acetyltransferase WcaF (182 aa).

The protein belongs to the transferase hexapeptide repeat family.

It functions in the pathway slime biogenesis; slime polysaccharide biosynthesis. The protein is Putative colanic acid biosynthesis acetyltransferase WcaF (wcaF) of Shigella flexneri.